The primary structure comprises 365 residues: Cobalt-precorrin-5B C(1)-methyltransferase (365 aa).

Belongs to the CbiD family.

The catalysed reaction is Co-precorrin-5B + S-adenosyl-L-methionine = Co-precorrin-6A + S-adenosyl-L-homocysteine. Its pathway is cofactor biosynthesis; adenosylcobalamin biosynthesis; cob(II)yrinate a,c-diamide from sirohydrochlorin (anaerobic route): step 6/10. Catalyzes the methylation of C-1 in cobalt-precorrin-5B to form cobalt-precorrin-6A. The protein is Cobalt-precorrin-5B C(1)-methyltransferase of Geobacillus sp. (strain WCH70).